The sequence spans 144 residues: INO80 complex subunit 5 (144 aa).

The tract at residues 1-58 is disordered; that stretch reads MAAQKKQGERVLPARSTRKRRQLPDMLYYDERTDSYVTPQERSLSEANAQTRPAPNTI. Polar residues predominate over residues 35-58; that stretch reads SYVTPQERSLSEANAQTRPAPNTI.

In terms of assembly, component of the INO80 chromatin remodeling complex.

Its subcellular location is the nucleus. Its function is as follows. Component of the INO80 complex which remodels chromatin by shifting nucleosomes and is involved in DNA repair. The polypeptide is INO80 complex subunit 5 (iec5) (Schizosaccharomyces pombe (strain 972 / ATCC 24843) (Fission yeast)).